The following is a 344-amino-acid chain: Fe-S cluster assembly protein DRE2 (344 aa).

The N-terminal SAM-like domain stretch occupies residues 1 to 160 (MTSNILLLLH…KKLNNDNAST (160 aa)). The segment at 154–179 (NNDNASTPGLTDSSAGTSEDETATVS) is disordered. Residues 155 to 170 (NDNASTPGLTDSSAGT) show a composition bias toward polar residues. Residues 161–223 (PGLTDSSAGT…NDLIAESNKY (63 aa)) form a linker region. [2Fe-2S] cluster is bound by residues C231, C243, C246, and C248. Positions 231-248 (CELPNGKKRKKACKDCTC) are fe-S binding site A. [4Fe-4S] cluster-binding residues include C313, C316, C324, and C327. Short sequence motifs (cx2C motif) lie at residues 313–316 (CGSC) and 324–327 (CDGC). The tract at residues 313–327 (CGSCSLGDAFRCDGC) is fe-S binding site B.

It belongs to the anamorsin family. As to quaternary structure, monomer. Interacts with TAH18. Interacts with MIA40. [2Fe-2S] cluster serves as cofactor. It depends on [4Fe-4S] cluster as a cofactor.

It is found in the cytoplasm. The protein resides in the mitochondrion intermembrane space. Functionally, component of the cytosolic iron-sulfur (Fe-S) protein assembly (CIA) machinery required for the maturation of extramitochondrial Fe-S proteins. Part of an electron transfer chain functioning in an early step of cytosolic Fe-S biogenesis, facilitating the de novo assembly of a [4Fe-4S] cluster on the scaffold complex CFD1-NBP35. Electrons are transferred to DRE2 from NADPH via the FAD- and FMN-containing protein TAH18. TAH18-DRE2 are also required for the assembly of the diferric tyrosyl radical cofactor of ribonucleotide reductase (RNR), probably by providing electrons for reduction during radical cofactor maturation in the catalytic small subunit RNR2. This Candida tropicalis (strain ATCC MYA-3404 / T1) (Yeast) protein is Fe-S cluster assembly protein DRE2.